The sequence spans 128 residues: Small ribosomal subunit protein uS12 (128 aa).

A disordered region spans residues 1 to 24; sequence MPTFNQLVKYGREKRKKKSKAPAL. Asp89 is modified (3-methylthioaspartic acid). The disordered stretch occupies residues 105 to 128; the sequence is AGVEGRRQSRSKYGTKRPKEEKGG.

The protein belongs to the universal ribosomal protein uS12 family. Part of the 30S ribosomal subunit. Contacts proteins S8 and S17. May interact with IF1 in the 30S initiation complex.

Functionally, with S4 and S5 plays an important role in translational accuracy. Its function is as follows. Interacts with and stabilizes bases of the 16S rRNA that are involved in tRNA selection in the A site and with the mRNA backbone. Located at the interface of the 30S and 50S subunits, it traverses the body of the 30S subunit contacting proteins on the other side and probably holding the rRNA structure together. The combined cluster of proteins S8, S12 and S17 appears to hold together the shoulder and platform of the 30S subunit. In Aquifex aeolicus (strain VF5), this protein is Small ribosomal subunit protein uS12.